Here is a 525-residue protein sequence, read N- to C-terminus: Cytochrome P450 monooxygenase bsc2 (525 aa).

The helical transmembrane segment at 12-32 (SLFILWLTTLLVSVLATAAYI) threads the bilayer. N-linked (GlcNAc...) asparagine glycans are attached at residues N86 and N317. C456 provides a ligand contact to heme.

This sequence belongs to the cytochrome P450 family. Heme is required as a cofactor.

The protein localises to the membrane. It functions in the pathway mycotoxin biosynthesis. Its function is as follows. Cytochrome P450 monooxygenase; part of the gene cluster that mediates the biosynthesis of the diterpene glucoside brassicicene C. In the first step of the brassicicene C biosynthesis, the bifunctional diterpene synthase bsc8 that possesses both prenyl transferase and terpene cyclase activity, converts isopentenyl diphosphate and dimethylallyl diphosphate into geranylgeranyl diphosphate (GGDP) that is further converted into fusicocca-2,10(14)-diene, the first precursor for brassicicene C. Fusicocca-2,10(14)-diene is then substrate of cytochrome P450 monooxygenase bsc1 for hydroxylation at the C-8 position. Oxidation at C-16 position to aldehyde is then catalyzed by the cytochrome P450 monooyxygenase bsc7, yielding fusicocca-2,10(14)-diene-8-beta,16-diol. Follows the isomerization of the double bond and reduction of aldehyde to alcohol catalyzed by the short-chain dehydrogenase/reductase bsc3 to yield the diol compound fusicocca-1,10(14)-diene-8 beta,16-diol. The next step is the oxidation at the C-3 position of fusicocca-2,10(14)-diene-8-beta,16-diol catalyzed by the alpha-ketoglutarate dependent dioxygenase bsc9, to produce a triol compound. Methylation of the hydroxy group at position 16 is performed by the methyltransferase bsc6. 16-O-methylation is followed by oxidation at the C-13 position to ketone and an alkyl shift of the methyl group leads to brassicicene C. Although the probable acetyltransferase bsc4 is included in the gene cluster, no acetylation reactions are necessary for brassicicene C biosynthesis. However, the fact that brassicicene E, which is a structurally related compound having an acetoxy group at position 12, was previously isolated from another strain of A.brassicicola suggests that the ATCC 96836 strain might also produce a small amount of brassicicene E. In Alternaria brassicicola (Dark leaf spot agent), this protein is Cytochrome P450 monooxygenase bsc2.